The chain runs to 293 residues: Magnetosome protein MamB (293 aa).

The Cytoplasmic portion of the chain corresponds to 1–12 (MTTAACRKCRDE). Residues 1–214 (MTTAACRKCR…GLMDTSVEND (214 aa)) are transmembrane domain (TMD). Residues 13–33 (VIWWAFFINIGQTTYKGVLGV) form a helical membrane-spanning segment. Residues 34–78 (LSGSAALVADAMHSGADVVATLVTMFSVKVSDKKADEKYPFGYGN) lie on the Lumenal side of the membrane. Residues 79 to 99 (IQFIASSIVGLILFFGALYLM) form a helical membrane-spanning segment. Residues 100–105 (YESTMQ) lie on the Cytoplasmic side of the membrane. Residues 106–126 (IIAGNTSSPSPFAVLGAIVSI) traverse the membrane as a helical segment. Over 127–158 (ATNELMFRYQSCVGRQNNSPAIIANAWDNRSD) the chain is Lumenal. The chain crosses the membrane as a helical span at residues 159-179 (ALSSVAVLIGIVAAVVGFPIA). The Cytoplasmic segment spans residues 180–293 (DRLAAIGVGI…VGVTPVRIAA (114 aa)). The segment at 215–293 (VLVDAYNIAK…VGVTPVRIAA (79 aa)) is C-terminal domain (CTD). 3 residues coordinate Zn(2+): His245, Asp247, and His283.

The protein belongs to the cation diffusion facilitator (CDF) transporter (TC 2.A.4) family. The isolated C-terminal domain (approximately 213-293) forms homodimers. Forms heterodimers with MamM.

The protein localises to the magnetosome membrane. Plays a dual, essential role in magnetosome formation; required for magnetosome vesicle formation as well as biomineralization. Probably binds and transports iron. Requires heterodimerization with MamM for stability. The sequence is that of Magnetosome protein MamB (mamB) from Magnetospira sp. (strain QH-2) (Marine magnetic spirillum (strain QH-2)).